The chain runs to 364 residues: Autophagy-related protein 5 (364 aa).

Polar residues predominate over residues 1–13 (MASPNPYSYSPQL). The tract at residues 1-103 (MASPNPYSYS…SLPPKPKPSS (103 aa)) is disordered. Low complexity predominate over residues 28-42 (SSPSFRSTPFRSSRG). Residues 43 to 53 (TGAGTGIGLGL) show a composition bias toward gly residues. The segment covering 72–82 (RSGDGSHDDLP) has biased composition (basic and acidic residues). A Glycyl lysine isopeptide (Lys-Gly) (interchain with G-Cter in ATG12) cross-link involves residue K202. Residues 262-306 (PSSPSPPSSDQQQPQRPGGSSSSGSYRVMQTLVPPRGPNNRTPQT) are disordered. Low complexity predominate over residues 269-286 (SSDQQQPQRPGGSSSSGS).

Belongs to the ATG5 family. Conjugated with atg12. Post-translationally, conjugated to atg12; which is essential for autophagy.

The protein localises to the preautophagosomal structure membrane. Its function is as follows. Involved in cytoplasm to vacuole transport (Cvt) and autophagic vesicle formation. Autophagy is essential for maintenance of amino acid levels and protein synthesis under nitrogen starvation. Required for selective autophagic degradation of the nucleus (nucleophagy). Also required for mitophagy, which eliminates defective or superfluous mitochondria in order to fulfill cellular energy requirements and prevent excess ROS production. Conjugation with atg12, through a ubiquitin-like conjugating system involving apg-5/atg7 as an E1-like activating enzyme and atg10 as an E2-like conjugating enzyme, is essential for its function. The atg12-apg-4/atg5 conjugate acts as an E3-like enzyme which is required for lipidation of apg-6/atg8 and apg-6/atg8 association to the vesicle membranes. The polypeptide is Autophagy-related protein 5 (apg-4) (Neurospora crassa (strain ATCC 24698 / 74-OR23-1A / CBS 708.71 / DSM 1257 / FGSC 987)).